Consider the following 379-residue polypeptide: Fimbrium subunit Fim1C (379 aa).

A signal peptide spans 1–17 (MEVKSLLMVMATLTIAG). Residue cysteine 18 is the site of N-palmitoyl cysteine attachment. Cysteine 18 carries S-diacylglycerol cysteine lipidation. The propeptide occupies 18-45 (CSQNEMTEMNPDTNRTIGLDVYTEVQTR).

It belongs to the bacteroidetes fimbrillin superfamily. Mfa-like family. In terms of assembly, may be part of the fimbrial tip.

The protein resides in the fimbrium. Its subcellular location is the cell outer membrane. In terms of biological role, probably a component of the fimbrium tip. Fimbriae are filamentous appendages on the cell surface that mediate cell adhesion and biofilm formation. This Phocaeicola vulgatus (strain ATCC 8482 / DSM 1447 / JCM 5826 / CCUG 4940 / NBRC 14291 / NCTC 11154) (Bacteroides vulgatus) protein is Fimbrium subunit Fim1C (fim1C).